We begin with the raw amino-acid sequence, 427 residues long: Inward rectifier potassium channel 2 (427 aa).

Topologically, residues 1-81 are cytoplasmic; it reads MGSVRTNRYS…IFTTCVDIRW (81 aa). Position 76 is an S-nitrosocysteine (Cys-76). A helical membrane pass occupies residues 82–106; the sequence is RWMLVIFCLAFVLSWLFFGCVFWLI. Residues 107-128 are Extracellular-facing; the sequence is ALLHGDLDASRESKACVSEVNS. The segment at residues 129 to 140 is an intramembrane region (helical; Pore-forming); that stretch reads FTAAFLFSIETQ. Residues 141–147 constitute an intramembrane region (pore-forming); it reads TTIGYGF. The short motif at 142–147 is the Selectivity filter element; sequence TIGYGF. Topologically, residues 148–156 are extracellular; it reads RCVTDECPV. The helical transmembrane segment at 157–178 threads the bilayer; that stretch reads AVFMVVFQSIVGCIIDAFIIGA. The Cytoplasmic portion of the chain corresponds to 179-427; the sequence is VMAKMAKPKK…PRPLRRESEI (249 aa). The tract at residues 181 to 208 is polyphosphoinositide (PIP2)-binding; the sequence is AKMAKPKKRNETLVFSHNAVIAMRDGKL. The tract at residues 384-427 is disordered; sequence SKEEDDSENGVPESTSTDTPPDIDLHNQASVPLEPRPLRRESEI. A PDZ-binding motif is present at residues 425–427; it reads SEI.

It belongs to the inward rectifier-type potassium channel (TC 1.A.2.1) family. KCNJ2 subfamily. In terms of assembly, homotetramer. Homomultimeric and heteromultimeric association with KCNJ4/Kir2.3. Can form heteromeric channels with Kir2.6/KCNJ18. Associates, via its PDZ-recognition domain, with a complex containing LIN7A, LIN7B, LIN7C, DLG1, CASK and APBA1. Post-translationally, S-nitrosylation increases the open probability and inward rectifying currents. Highly expressed in the ventricle and skeletal muscle, moderately in cerebrum and cerebellum. Only low levels are detected in kidney or lung.

Its subcellular location is the cell membrane. The protein localises to the sarcolemma. It is found in the T-tubule. The catalysed reaction is K(+)(in) = K(+)(out). Its activity is regulated as follows. Activated by phosphatidylinositol 4,5 biphosphate (PtdIns(4,5)P2). Its function is as follows. Inward rectifier potassium channels are characterized by a greater tendency to allow potassium to flow into the cell rather than out of it. Their voltage dependence is regulated by the concentration of extracellular potassium; as external potassium is raised, the voltage range of the channel opening shifts to more positive voltages. The inward rectification is mainly due to the blockage of outward current by internal magnesium. Can be blocked by extracellular barium and cesium. Probably participates in establishing action potential waveform and excitability of neuronal and muscle tissues. The polypeptide is Inward rectifier potassium channel 2 (KCNJ2) (Oryctolagus cuniculus (Rabbit)).